Reading from the N-terminus, the 204-residue chain is Protein GET1 (204 aa).

Topologically, residues 1–4 (MPSL) are lumenal. A helical transmembrane segment spans residues 5–24 (LLIIFVTELVVQLVNTLGAT). Residues 25 to 110 (TINDLLWRIY…KFDRTLTTTR (86 aa)) are Cytoplasmic-facing. The stretch at 72-107 (AKWAKLRRQHDKLLEDLEKKKASLEAARTKFDRTLT) forms a coiled coil. The helical transmembrane segment at 111-131 (TVSTRSVQWFLPFWYSKEPMF) threads the bilayer. The Lumenal portion of the chain corresponds to 132–155 (WLPYGWFPYYVEWFASFPRAPMGS). A helical transmembrane segment spans residues 156–172 (VSIVVWQWACTAVIALM). At 173–204 (IEAATAALVYVAAKQSQKIRQPVPAQSEKKDS) the chain is on the cytoplasmic side.

It belongs to the WRB/GET1 family. Interacts with GET3.

It is found in the endoplasmic reticulum membrane. Functionally, required for the post-translational delivery of tail-anchored (TA) proteins to the endoplasmic reticulum. Acts as a membrane receptor for soluble GET3, which recognizes and selectively binds the transmembrane domain of TA proteins in the cytosol. The protein is Protein GET1 of Podospora anserina (strain S / ATCC MYA-4624 / DSM 980 / FGSC 10383) (Pleurage anserina).